A 253-amino-acid polypeptide reads, in one-letter code: Snake venom serine proteinase 14 (253 aa).

A signal peptide spans 1-18 (MVLIRVLANLLILQLSYA). Positions 19-24 (QKSSEL) are excised as a propeptide. A Peptidase S1 domain is found at 25 to 244 (VIGGDECNIN…YTDWIQSIIA (220 aa)). 6 cysteine pairs are disulfide-bonded: Cys31–Cys158, Cys49–Cys65, Cys93–Cys251, Cys137–Cys205, Cys169–Cys184, and Cys195–Cys220. Active-site charge relay system residues include His64 and Asp105. N-linked (GlcNAc...) asparagine glycosylation is found at Asn116, Asn117, and Asn149. The Charge relay system role is filled by Ser199.

Belongs to the peptidase S1 family. Snake venom subfamily. In terms of assembly, monomer. Expressed by the venom gland.

It localises to the secreted. Its function is as follows. Snake venom serine protease that may act in the hemostasis system of the prey. This chain is Snake venom serine proteinase 14, found in Crotalus adamanteus (Eastern diamondback rattlesnake).